Here is an 80-residue protein sequence, read N- to C-terminus: DNA-directed RNA polymerase RPB10 homolog (80 aa).

Residues cysteine 7, cysteine 10, cysteine 65, and cysteine 66 each contribute to the Zn(2+) site.

This sequence belongs to the archaeal RpoN/eukaryotic RPB10 RNA polymerase subunit family. Part of the viral DNA-directed RNA polymerase that consists of 8 polII-like subunits (RPB1, RPB2, RPB3, RPB5, RPB6, RPB7, RPB9, RPB10), a capping enzyme and a termination factor.

It localises to the host cytoplasm. Its function is as follows. Component of the DNA-directed RNA polymerase (RNAP) that catalyzes the transcription in the cytoplasm of viral DNA into RNA using the four ribonucleoside triphosphates as substrates. The protein is DNA-directed RNA polymerase RPB10 homolog of African swine fever virus (isolate Pig/Kenya/KEN-50/1950) (ASFV).